A 214-amino-acid polypeptide reads, in one-letter code: Pyridoxine/pyridoxamine 5'-phosphate oxidase (214 aa).

Substrate-binding positions include 7 to 10 (REEY) and Lys-65. FMN-binding positions include 60 to 65 (RTVLLK), 75 to 76 (FT), Arg-81, Lys-82, and Gln-104. Positions 122, 126, and 130 each coordinate substrate. FMN-binding positions include 139–140 (QS) and Trp-184. 190 to 192 (RLH) provides a ligand contact to substrate. Arg-194 lines the FMN pocket.

This sequence belongs to the pyridoxamine 5'-phosphate oxidase family. In terms of assembly, homodimer. FMN is required as a cofactor.

It catalyses the reaction pyridoxamine 5'-phosphate + O2 + H2O = pyridoxal 5'-phosphate + H2O2 + NH4(+). It carries out the reaction pyridoxine 5'-phosphate + O2 = pyridoxal 5'-phosphate + H2O2. It functions in the pathway cofactor metabolism; pyridoxal 5'-phosphate salvage; pyridoxal 5'-phosphate from pyridoxamine 5'-phosphate: step 1/1. Its pathway is cofactor metabolism; pyridoxal 5'-phosphate salvage; pyridoxal 5'-phosphate from pyridoxine 5'-phosphate: step 1/1. Catalyzes the oxidation of either pyridoxine 5'-phosphate (PNP) or pyridoxamine 5'-phosphate (PMP) into pyridoxal 5'-phosphate (PLP). The sequence is that of Pyridoxine/pyridoxamine 5'-phosphate oxidase from Crocosphaera subtropica (strain ATCC 51142 / BH68) (Cyanothece sp. (strain ATCC 51142)).